The chain runs to 374 residues: U-box domain-containing protein 8 (374 aa).

Residues 4 to 79 form the U-box domain; that stretch reads DLPNDFRCPI…LNFAHVSLKE (76 aa). ARM repeat units lie at residues 126 to 165, 167 to 206, 208 to 248, 250 to 288, and 289 to 327; these read SSIRRKVTESGAVRAALDCVDSCNQVLQEKSLSLLLNLSL, DDNKVGLVADGVIRRIVTVLRVGSPDCKAIAATLLTSLAV, EVNK…ALCS, PDNRKRVVDCGSVPILVEAADSGLERAVEVLGLLVKCRG, and GREEMSKVSGFVEVLVNVLRNGNLKGIQYSLFILNCLCC.

In terms of tissue distribution, expressed in the whole plant.

The enzyme catalyses S-ubiquitinyl-[E2 ubiquitin-conjugating enzyme]-L-cysteine + [acceptor protein]-L-lysine = [E2 ubiquitin-conjugating enzyme]-L-cysteine + N(6)-ubiquitinyl-[acceptor protein]-L-lysine.. The protein operates within protein modification; protein ubiquitination. Functions as an E3 ubiquitin ligase. Involved in the age-dependent pseudo-self-compatibility process. The sequence is that of U-box domain-containing protein 8 (PUB8) from Arabidopsis thaliana (Mouse-ear cress).